We begin with the raw amino-acid sequence, 187 residues long: Nucleoside-triphosphatase THEP1 (187 aa).

ATP-binding positions include 9–16 (GRPGVGKT) and 100–107 (LIAIDEIG).

The protein belongs to the THEP1 NTPase family.

The catalysed reaction is a ribonucleoside 5'-triphosphate + H2O = a ribonucleoside 5'-diphosphate + phosphate + H(+). In terms of biological role, has nucleotide phosphatase activity towards ATP, GTP, CTP, TTP and UTP. May hydrolyze nucleoside diphosphates with lower efficiency. This chain is Nucleoside-triphosphatase THEP1, found in Hyperthermus butylicus (strain DSM 5456 / JCM 9403 / PLM1-5).